Reading from the N-terminus, the 250-residue chain is Cell division protein FtsQ (250 aa).

The Cytoplasmic portion of the chain corresponds to 1-11 (MWNNVRQLNLA). A helical membrane pass occupies residues 12-32 (ASALYALLLLVLAAAGCYWLI). The Periplasmic portion of the chain corresponds to 33-250 (QRPAFALREI…FLTDTDKGKK (218 aa)). One can recognise a POTRA domain in the interval 37-106 (FALREIRIDG…NALAVTLEEY (70 aa)).

The protein belongs to the FtsQ/DivIB family. FtsQ subfamily. In terms of assembly, part of a complex composed of FtsB, FtsL and FtsQ.

Its subcellular location is the cell inner membrane. In terms of biological role, essential cell division protein. May link together the upstream cell division proteins, which are predominantly cytoplasmic, with the downstream cell division proteins, which are predominantly periplasmic. May control correct divisome assembly. This chain is Cell division protein FtsQ, found in Burkholderia pseudomallei (strain K96243).